The sequence spans 244 residues: Small ribosomal subunit protein eS4 (244 aa).

An S4 RNA-binding domain is found at 43–106 (LPLLLVVRDV…DETYLVLFDE (64 aa)).

The protein belongs to the eukaryotic ribosomal protein eS4 family.

This chain is Small ribosomal subunit protein eS4, found in Methanococcus maripaludis (strain DSM 14266 / JCM 13030 / NBRC 101832 / S2 / LL).